A 277-amino-acid chain; its full sequence is Thiazole synthase (277 aa).

The Schiff-base intermediate with DXP role is filled by K119. 1-deoxy-D-xylulose 5-phosphate is bound by residues G180, 206 to 207 (AG), and 228 to 229 (NT).

This sequence belongs to the ThiG family. Homotetramer. Forms heterodimers with either ThiH or ThiS.

It is found in the plastid. It localises to the chloroplast. The enzyme catalyses [ThiS sulfur-carrier protein]-C-terminal-Gly-aminoethanethioate + 2-iminoacetate + 1-deoxy-D-xylulose 5-phosphate = [ThiS sulfur-carrier protein]-C-terminal Gly-Gly + 2-[(2R,5Z)-2-carboxy-4-methylthiazol-5(2H)-ylidene]ethyl phosphate + 2 H2O + H(+). It participates in cofactor biosynthesis; thiamine diphosphate biosynthesis. Functionally, catalyzes the rearrangement of 1-deoxy-D-xylulose 5-phosphate (DXP) to produce the thiazole phosphate moiety of thiamine. Sulfur is provided by the thiocarboxylate moiety of the carrier protein ThiS. In vitro, sulfur can be provided by H(2)S. This chain is Thiazole synthase, found in Porphyra purpurea (Red seaweed).